The sequence spans 116 residues: MLSCRLQCALAALSIVLALGGVTGAPSDPRLRQFLQKSLAAAAGKQELAKYFLAELLSEPNQTEIDALEPEDLSQAAEQDEMRLELQRSANSNPAMAPRERKAGCKNFFWKTFTSC.

The first 24 residues, 1–24, serve as a signal peptide directing secretion; that stretch reads MLSCRLQCALAALSIVLALGGVTG. The propeptide occupies 25 to 88; sequence APSDPRLRQF…QDEMRLELQR (64 aa). Alanine amide is present on A43. A disulfide bridge connects residues C105 and C116.

It belongs to the somatostatin family. In terms of processing, C-terminal amidation of the neuronostatin peptide is required for its biological activity, including for the regulation of mean arterial pressure.

It is found in the secreted. Functionally, inhibits the secretion of pituitary hormones, including that of growth hormone/somatotropin (GH1), PRL, ACTH, luteinizing hormone (LH) and TSH. Also impairs ghrelin- and GnRH-stimulated secretion of GH1 and LH; the inhibition of ghrelin-stimulated secretion of GH1 can be further increased by neuronostatin. May enhance low-glucose-induced glucagon release by pancreatic alpha cells. This effect may be mediated by binding to GPR107 and PKA activation. May regulate cardiac contractile function. May compromise cardiomyocyte viability. In the central nervous system, may impair memory retention and may affect hippocampal excitability. May also have anxiolytic and anorexigenic effects. May play a role in arterial pressure regulation. May inhibit basal, but not ghrelin- or GnRH-stimulated secretion of GH1 or LH, but does not affect the release of other pituitary hormones, including PRL, ACTH, FSH or TSH. Potentiates inhibitory action of somatostatin on ghrelin-stimulated secretion of GH1, but not that on GnRH-stimulated secretion of LH. This is Somatostatin (SST) from Bos taurus (Bovine).